Consider the following 72-residue polypeptide: Dermaseptin-A4 (72 aa).

A signal peptide spans 1-22 (MAFLKKSLFLVLFLGMVSLSIC). Positions 23–41 (EEEKREEENEQEDDEQSEE) are excised as a propeptide. Residues 24-43 (EEKREEENEQEDDEQSEEKR) are disordered. The segment covering 30-39 (ENEQEDDEQS) has biased composition (acidic residues). The residue at position 69 (A69) is an Alanine amide. Residues 71-72 (EQ) constitute a propeptide that is removed on maturation.

The protein belongs to the frog skin active peptide (FSAP) family. Dermaseptin subfamily. As to expression, expressed by the skin glands.

It is found in the secreted. In terms of biological role, possesses a potent antimicrobial activity against Gram-positive and Gram-negative bacteria. Probably acts by disturbing membrane functions with its amphipathic structure. The polypeptide is Dermaseptin-A4 (Agalychnis annae (Blue-sided leaf frog)).